Reading from the N-terminus, the 726-residue chain is Catalase-peroxidase (726 aa).

The tryptophyl-tyrosyl-methioninium (Trp-Tyr) (with M-239) cross-link spans 90–213 (WHAAGTYRIG…LAAVQMGLIY (124 aa)). H91 acts as the Proton acceptor in catalysis. Positions 213–239 (YVNPEGPNGNPDPLAAARDIRETFARM) form a cross-link, tryptophyl-tyrosyl-methioninium (Tyr-Met) (with W-90). Position 254 (H254) interacts with heme b. A disordered region spans residues 334-359 (AHQWKPKHGAGANTVPDAHDPSKRHA).

This sequence belongs to the peroxidase family. Peroxidase/catalase subfamily. As to quaternary structure, homodimer or homotetramer. It depends on heme b as a cofactor. In terms of processing, formation of the three residue Trp-Tyr-Met cross-link is important for the catalase, but not the peroxidase activity of the enzyme.

It carries out the reaction H2O2 + AH2 = A + 2 H2O. The enzyme catalyses 2 H2O2 = O2 + 2 H2O. Its function is as follows. Bifunctional enzyme with both catalase and broad-spectrum peroxidase activity. This Bradyrhizobium sp. (strain BTAi1 / ATCC BAA-1182) protein is Catalase-peroxidase.